Consider the following 112-residue polypeptide: uncharacterized protein (112 aa).

This is an uncharacterized protein from Rickettsia conorii (strain ATCC VR-613 / Malish 7).